The sequence spans 525 residues: Keratin, type I cytoskeletal 24 (525 aa).

Residues 1 to 30 (MSCSSRASSSRAGGSSSARVSAGGSSFSSG) form a disordered region. Residues 1–139 (MSCSSRASSS…VGDGGLFSGG (139 aa)) are head. The coil 1A stretch occupies residues 140-175 (EKQTMQNLNDRLANYLDKVRALEEANTDLENKIKEW). The IF rod domain maps to 140-456 (EKQTMQNLND…RLLDGEGGGS (317 aa)). The segment at 176–198 (YDKYGPGSGDGGSGRDYSKYYSI) is linker 1. Residues 199–290 (IEDLRNQIIA…KNHEEEMKNM (92 aa)) are coil 1B. The interval 291-313 (QGSSGGEVTVEMNAAPGTDLTKL) is linker 12. Residues 314–452 (LNDMRAQYEE…ETYRRLLDGE (139 aa)) form a coil 2 region. The segment at 453-525 (GGGSSFAEFG…VSSISEVKVK (73 aa)) is tail. The interval 459-497 (AEFGGRNSGSVNMGSRDLVSGDSRSGSCSGQGRDSSKTR) is disordered. Positions 480 to 491 (DSRSGSCSGQGR) are enriched in polar residues.

It belongs to the intermediate filament family. As to quaternary structure, heterotetramer of two type I and two type II keratins. In terms of tissue distribution, highly expressed in keratinocytes, placenta, colon and spleen. Expressed at lower level in thymus and testis.

This is Keratin, type I cytoskeletal 24 (KRT24) from Homo sapiens (Human).